We begin with the raw amino-acid sequence, 476 residues long: Aspartyl/glutamyl-tRNA(Asn/Gln) amidotransferase subunit B (476 aa).

Belongs to the GatB/GatE family. GatB subfamily. As to quaternary structure, heterotrimer of A, B and C subunits.

It carries out the reaction L-glutamyl-tRNA(Gln) + L-glutamine + ATP + H2O = L-glutaminyl-tRNA(Gln) + L-glutamate + ADP + phosphate + H(+). The catalysed reaction is L-aspartyl-tRNA(Asn) + L-glutamine + ATP + H2O = L-asparaginyl-tRNA(Asn) + L-glutamate + ADP + phosphate + 2 H(+). Its function is as follows. Allows the formation of correctly charged Asn-tRNA(Asn) or Gln-tRNA(Gln) through the transamidation of misacylated Asp-tRNA(Asn) or Glu-tRNA(Gln) in organisms which lack either or both of asparaginyl-tRNA or glutaminyl-tRNA synthetases. The reaction takes place in the presence of glutamine and ATP through an activated phospho-Asp-tRNA(Asn) or phospho-Glu-tRNA(Gln). This is Aspartyl/glutamyl-tRNA(Asn/Gln) amidotransferase subunit B from Latilactobacillus sakei subsp. sakei (strain 23K) (Lactobacillus sakei subsp. sakei).